The sequence spans 98 residues: NADH-ubiquinone oxidoreductase chain 4L (98 aa).

Helical transmembrane passes span 1-21, 26-46, and 61-81; these read MPSISTNIILAFTTALLGVLI, LMSSLLCLEGMMLSMFILVSL, and IILLVFAACEAAVGLALLVMV.

The protein belongs to the complex I subunit 4L family. In terms of assembly, core subunit of respiratory chain NADH dehydrogenase (Complex I) which is composed of 45 different subunits.

It localises to the mitochondrion inner membrane. The enzyme catalyses a ubiquinone + NADH + 5 H(+)(in) = a ubiquinol + NAD(+) + 4 H(+)(out). In terms of biological role, core subunit of the mitochondrial membrane respiratory chain NADH dehydrogenase (Complex I) which catalyzes electron transfer from NADH through the respiratory chain, using ubiquinone as an electron acceptor. Part of the enzyme membrane arm which is embedded in the lipid bilayer and involved in proton translocation. The chain is NADH-ubiquinone oxidoreductase chain 4L (MT-ND4L) from Galago senegalensis (Northern lesser bushbaby).